A 493-amino-acid polypeptide reads, in one-letter code: UDP-N-acetylmuramoyl-L-alanyl-D-glutamate--L-lysine ligase (493 aa).

Position 30 (Ser-30) interacts with UDP-N-acetyl-alpha-D-muramoyl-L-alanyl-D-glutamate. 110 to 116 is an ATP binding site; the sequence is GTNGKTS. Residues Asn-151, 152–153, Ser-179, and Arg-187 each bind UDP-N-acetyl-alpha-D-muramoyl-L-alanyl-D-glutamate; that span reads TT. Lys-219 carries the post-translational modification N6-carboxylysine. The L-lysine recognition motif motif lies at 406–409; it reads DNPA.

Belongs to the MurCDEF family. MurE subfamily. It depends on Mg(2+) as a cofactor. Post-translationally, carboxylation is probably crucial for Mg(2+) binding and, consequently, for the gamma-phosphate positioning of ATP.

The protein resides in the cytoplasm. The enzyme catalyses UDP-N-acetyl-alpha-D-muramoyl-L-alanyl-D-glutamate + L-lysine + ATP = UDP-N-acetyl-alpha-D-muramoyl-L-alanyl-gamma-D-glutamyl-L-lysine + ADP + phosphate + H(+). It participates in cell wall biogenesis; peptidoglycan biosynthesis. Catalyzes the addition of L-lysine to the nucleotide precursor UDP-N-acetylmuramoyl-L-alanyl-D-glutamate (UMAG) in the biosynthesis of bacterial cell-wall peptidoglycan. Cannot use diaminopimelate as substrate. Can accept L-ornithine as substrate, but the efficiency is 400-fold lower than that with L-lysine. Seems to have a role in beta-lactam antibiotic resistance. The polypeptide is UDP-N-acetylmuramoyl-L-alanyl-D-glutamate--L-lysine ligase (Staphylococcus aureus (strain NCTC 8325 / PS 47)).